A 77-amino-acid chain; its full sequence is Translation initiation factor IF-1, chloroplastic (77 aa).

An S1-like domain is found at 1–71 (MKEQKWIHEG…TKGRIIYRIR (71 aa)).

This sequence belongs to the IF-1 family. Component of the 30S ribosomal translation pre-initiation complex which assembles on the 30S ribosome in the order IF-2 and IF-3, IF-1 and N-formylmethionyl-tRNA(fMet); mRNA recruitment can occur at any time during PIC assembly.

Its subcellular location is the plastid. It is found in the chloroplast. Its function is as follows. One of the essential components for the initiation of protein synthesis. Stabilizes the binding of IF-2 and IF-3 on the 30S subunit to which N-formylmethionyl-tRNA(fMet) subsequently binds. Helps modulate mRNA selection, yielding the 30S pre-initiation complex (PIC). Upon addition of the 50S ribosomal subunit IF-1, IF-2 and IF-3 are released leaving the mature 70S translation initiation complex. In Vitis vinifera (Grape), this protein is Translation initiation factor IF-1, chloroplastic.